The following is a 72-amino-acid chain: Translation initiation factor IF-1 (72 aa).

The 72-residue stretch at 1 to 72 (MSKDDSIEFE…TKGRITYRMK (72 aa)) folds into the S1-like domain.

It belongs to the IF-1 family. In terms of assembly, component of the 30S ribosomal translation pre-initiation complex which assembles on the 30S ribosome in the order IF-2 and IF-3, IF-1 and N-formylmethionyl-tRNA(fMet); mRNA recruitment can occur at any time during PIC assembly.

It is found in the cytoplasm. In terms of biological role, one of the essential components for the initiation of protein synthesis. Stabilizes the binding of IF-2 and IF-3 on the 30S subunit to which N-formylmethionyl-tRNA(fMet) subsequently binds. Helps modulate mRNA selection, yielding the 30S pre-initiation complex (PIC). Upon addition of the 50S ribosomal subunit IF-1, IF-2 and IF-3 are released leaving the mature 70S translation initiation complex. The sequence is that of Translation initiation factor IF-1 from Xanthomonas campestris pv. campestris (strain 8004).